A 222-amino-acid chain; its full sequence is N-(5'-phosphoribosyl)anthranilate isomerase (222 aa).

It belongs to the TrpF family.

The catalysed reaction is N-(5-phospho-beta-D-ribosyl)anthranilate = 1-(2-carboxyphenylamino)-1-deoxy-D-ribulose 5-phosphate. It functions in the pathway amino-acid biosynthesis; L-tryptophan biosynthesis; L-tryptophan from chorismate: step 3/5. The protein is N-(5'-phosphoribosyl)anthranilate isomerase of Prosthecochloris aestuarii (strain DSM 271 / SK 413).